The following is a 348-amino-acid chain: D-alanine--D-alanine ligase (348 aa).

Residues 132–334 (KRVLESAGIA…YPDLIEKLVA (203 aa)) enclose the ATP-grasp domain. 162 to 217 (EEKLSYPVFTKPSNMGSSVGISKSDNQEELRASLDLAFKYDSRVLVEQGVTAREIE) lines the ATP pocket. Mg(2+) contacts are provided by Asp-288, Glu-301, and Asn-303.

The protein belongs to the D-alanine--D-alanine ligase family. Mg(2+) serves as cofactor. Requires Mn(2+) as cofactor.

It localises to the cytoplasm. The enzyme catalyses 2 D-alanine + ATP = D-alanyl-D-alanine + ADP + phosphate + H(+). It participates in cell wall biogenesis; peptidoglycan biosynthesis. Its function is as follows. Cell wall formation. The chain is D-alanine--D-alanine ligase from Streptococcus gordonii (strain Challis / ATCC 35105 / BCRC 15272 / CH1 / DL1 / V288).